We begin with the raw amino-acid sequence, 875 residues long: Probable serine/threonine-protein kinase samkC (875 aa).

A compositionally biased stretch (polar residues) spans 1 to 12 (METTTITSILDD). The segment at 1–47 (METTTITSILDDNNNNNNNNNNNNNNNNNNNNNNNNNNNNNNNNNYN) is disordered. Positions 13–45 (NNNNNNNNNNNNNNNNNNNNNNNNNNNNNNNNN) are enriched in low complexity. One can recognise an SAM domain in the interval 51–116 (WDNEMVCKWL…SEFDDLKNIF (66 aa)). A coiled-coil region spans residues 135-162 (DNNNLNNLNNNNNNNNNNNNNNNNNNNN). The span at 136 to 168 (NNNLNNLNNNNNNNNNNNNNNNNNNNNNNNNNN) shows a compositional bias: low complexity. The disordered stretch occupies residues 136–170 (NNNLNNLNNNNNNNNNNNNNNNNNNNNNNNNNNKT). The region spanning 181 to 452 (YVFIKQMKGS…SKQLLNFSWF (272 aa)) is the Protein kinase domain. ATP contacts are provided by residues 187–195 (MKGSVNCSL) and Lys210. Asp301 functions as the Proton acceptor in the catalytic mechanism. Disordered regions lie at residues 331-362 (NNND…NDTN) and 461-718 (SEPQ…NNNN). Over residues 474 to 554 (PQTSQSKPKP…KPKPSSSLSS (81 aa)) the composition is skewed to low complexity. Over residues 555–564 (EPPPLEPQPK) the composition is skewed to pro residues. Low complexity-rich tracts occupy residues 565–581 (PQTS…LSSS), 589–611 (QPTQ…SQPT), and 617–653 (QPKS…QQQK). Positions 626 to 655 (QSKQQQQQQQQQQQQQQQQQQQQQQQQKSK) form a coiled coil. Over residues 654 to 663 (SKPEQSKSKP) the composition is skewed to basic and acidic residues. Residues 664 to 718 (EQSQSKPQPGQPLQSPSKPQPIPSTTKTTTTTTTTTTPNNNNNNNNNNNNNNNNN) show a composition bias toward low complexity. A helical membrane pass occupies residues 842 to 862 (TLILYTFYYFLSNTLIYQIIL).

This sequence belongs to the protein kinase superfamily. Ser/Thr protein kinase family.

It is found in the membrane. It carries out the reaction L-seryl-[protein] + ATP = O-phospho-L-seryl-[protein] + ADP + H(+). The catalysed reaction is L-threonyl-[protein] + ATP = O-phospho-L-threonyl-[protein] + ADP + H(+). The sequence is that of Probable serine/threonine-protein kinase samkC (samkC) from Dictyostelium discoideum (Social amoeba).